The chain runs to 254 residues: Uracil-DNA glycosylase (254 aa).

The Proton acceptor role is filled by aspartate 78.

The protein belongs to the uracil-DNA glycosylase (UDG) superfamily. UNG family.

Its subcellular location is the cytoplasm. It carries out the reaction Hydrolyzes single-stranded DNA or mismatched double-stranded DNA and polynucleotides, releasing free uracil.. Its function is as follows. Excises uracil residues from the DNA which can arise as a result of misincorporation of dUMP residues by DNA polymerase or due to deamination of cytosine. This Bordetella petrii (strain ATCC BAA-461 / DSM 12804 / CCUG 43448) protein is Uracil-DNA glycosylase.